A 279-amino-acid polypeptide reads, in one-letter code: MKNNPLISIYMPTWNRQQLAIRAIKSVLRQDYSNWEMIIVDDCSTSWEQLQQYVTALNDPRITYIHNDINSGACAVRNQAIMLAQGEYITGIDDDDEWTPNRLSVFLAHKQQLVTHAFLYANDYVCQGEVYSQPASLPLYPKSPYSRRLFYKRNIIGNQVFTWAWRFKECLFDTELKAAQDYDIFLRMVVEYGEPWKVEEATQILHINHGEMQITSSPKKFSGYFHFYRKHKDKFDRASKKYQLFTLYQIRNKRMTWRTLLTLLSVRNGKRLADGIRGR.

To R.meliloti ExoO.

It functions in the pathway slime biogenesis; slime polysaccharide biosynthesis. The protein is Putative colanic acid biosynthesis glycosyl transferase WcaA (wcaA) of Escherichia coli (strain K12).